A 147-amino-acid chain; its full sequence is Hemoglobin subunit gamma-1 (147 aa).

Residues 3–147 (NFTAEDKAAI…VASALGSRYH (145 aa)) enclose the Globin domain. Thr13 bears the Phosphothreonine mark. A phosphoserine mark is found at Ser45, Ser51, and Ser53. Lys60 carries the N6-acetyllysine modification. Position 64 (His64) interacts with heme b. Residue Lys83 is modified to N6-acetyllysine. Residue His93 participates in heme b binding. Residue Cys94 is modified to S-nitrosocysteine. At Ser140 the chain carries Phosphoserine.

This sequence belongs to the globin family. In terms of assembly, heterotetramer of two alpha chains and two gamma chains in fetal hemoglobin (Hb F). As to expression, red blood cells.

Its function is as follows. Gamma chains make up the fetal hemoglobin F, in combination with alpha chains. This is Hemoglobin subunit gamma-1 (HBG1) from Plecturocebus moloch (Dusky titi monkey).